The sequence spans 96 residues: Co-chaperonin GroES (96 aa).

The protein belongs to the GroES chaperonin family. In terms of assembly, heptamer of 7 subunits arranged in a ring. Interacts with the chaperonin GroEL.

The protein resides in the cytoplasm. In terms of biological role, together with the chaperonin GroEL, plays an essential role in assisting protein folding. The GroEL-GroES system forms a nano-cage that allows encapsulation of the non-native substrate proteins and provides a physical environment optimized to promote and accelerate protein folding. GroES binds to the apical surface of the GroEL ring, thereby capping the opening of the GroEL channel. The chain is Co-chaperonin GroES from Shewanella baltica (strain OS223).